Here is a 315-residue protein sequence, read N- to C-terminus: Dihydroorotate dehydrogenase (fumarate) (315 aa).

Residues lysine 46, 70 to 74 (NSMGL), and asparagine 130 contribute to the substrate site. 46–47 (KS) is a binding site for FMN. Asparagine 130 provides a ligand contact to FMN. Residue cysteine 133 is the Nucleophile of the active site. FMN contacts are provided by lysine 167 and isoleucine 195. Residue 196–197 (NS) coordinates substrate. Residues glycine 224, 252–253 (GG), and 274–275 (GT) each bind FMN.

The protein belongs to the dihydroorotate dehydrogenase family. Type 1 subfamily. In terms of assembly, homodimer. It depends on FMN as a cofactor.

It is found in the cytoplasm. It carries out the reaction (S)-dihydroorotate + fumarate = orotate + succinate. Its pathway is pyrimidine metabolism; UMP biosynthesis via de novo pathway. Its function is as follows. Catalyzes the conversion of dihydroorotate to orotate with fumarate as the electron acceptor. The protein is Dihydroorotate dehydrogenase (fumarate) (URA1) of Kluyveromyces lactis (strain ATCC 8585 / CBS 2359 / DSM 70799 / NBRC 1267 / NRRL Y-1140 / WM37) (Yeast).